We begin with the raw amino-acid sequence, 199 residues long: Recombination protein RecR (199 aa).

A C4-type zinc finger spans residues 56 to 71 (CATCGNVAQEELCNIC). The region spanning 79–174 (SVICVVEEPK…KVTRLASGLP (96 aa)) is the Toprim domain.

It belongs to the RecR family.

May play a role in DNA repair. It seems to be involved in an RecBC-independent recombinational process of DNA repair. It may act with RecF and RecO. This is Recombination protein RecR from Streptomyces avermitilis (strain ATCC 31267 / DSM 46492 / JCM 5070 / NBRC 14893 / NCIMB 12804 / NRRL 8165 / MA-4680).